The sequence spans 155 residues: Small ribosomal subunit protein uS7 (155 aa).

It belongs to the universal ribosomal protein uS7 family. In terms of assembly, part of the 30S ribosomal subunit. Contacts proteins S9 and S11.

Functionally, one of the primary rRNA binding proteins, it binds directly to 16S rRNA where it nucleates assembly of the head domain of the 30S subunit. Is located at the subunit interface close to the decoding center, probably blocks exit of the E-site tRNA. This chain is Small ribosomal subunit protein uS7, found in Mycoplasma capricolum subsp. capricolum (strain California kid / ATCC 27343 / NCTC 10154).